Consider the following 299-residue polypeptide: Ribosomal protein L11 methyltransferase (299 aa).

S-adenosyl-L-methionine contacts are provided by threonine 140, glycine 161, aspartate 183, and asparagine 232.

This sequence belongs to the methyltransferase superfamily. PrmA family.

Its subcellular location is the cytoplasm. It carries out the reaction L-lysyl-[protein] + 3 S-adenosyl-L-methionine = N(6),N(6),N(6)-trimethyl-L-lysyl-[protein] + 3 S-adenosyl-L-homocysteine + 3 H(+). Functionally, methylates ribosomal protein L11. The chain is Ribosomal protein L11 methyltransferase from Synechococcus elongatus (strain ATCC 33912 / PCC 7942 / FACHB-805) (Anacystis nidulans R2).